Reading from the N-terminus, the 677-residue chain is Pro-neuregulin-1, membrane-bound isoform (677 aa).

Basic and acidic residues predominate over residues 1-12; it reads MAEKKKVKEGKG. Disordered stretches follow at residues 1–43 and 78–106; these read MAEK…KEIK and GAKNKPDSKPEHIKIRGKKKSSELQISKA. Residues 1–260 lie on the Extracellular side of the membrane; the sequence is MAEKKKVKEG…MEAEELYQKR (260 aa). Over residues 13 to 24 the composition is skewed to basic residues; that stretch reads RKGKGKKDRKGK. In terms of domain architecture, Ig-like C2-type spans 37 to 132; that stretch reads PKLKEIKTQS…GNDTVTVNVT (96 aa). A disulfide bridge links Cys57 with Cys116. A compositionally biased stretch (basic and acidic residues) spans 78 to 91; that stretch reads GAKNKPDSKPEHIK. Asn124 and Asn130 each carry an N-linked (GlcNAc...) asparagine glycan. One can recognise an EGF-like domain in the interval 188–232; sequence HLIKCSDKEKTYCVNGGECYVLNGITSSNQFMCKCKPGFTGARCT. 3 disulfides stabilise this stretch: Cys192-Cys206, Cys200-Cys220, and Cys222-Cys231. A helical transmembrane segment spans residues 261–280; it reads VLTITGICIDLLVVGDMCVV. Topologically, residues 281 to 677 are cytoplasmic; it reads DAYCKTKKQR…RKMTCKTLFI (397 aa). Positions 294–315 are enriched in basic and acidic residues; that stretch reads NDRLRQSLRERNKNITNKDNRP. Disordered stretches follow at residues 294 to 326, 350 to 375, 397 to 418, 457 to 479, and 503 to 617; these read NDRLRQSLRERNKNITNKDNRPHNPKNPPPRKN, ETSFSTSHYTSTTHHSTTVTQTPSHS, SVENSRHTSPTGPRGRLNGIGG, VEFKTPISPKSPCLETSPPESSL, and PPRL…FLSI. The segment covering 351–375 has biased composition (low complexity); the sequence is TSFSTSHYTSTTHHSTTVTQTPSHS. The segment covering 397–407 has biased composition (polar residues); the sequence is SVENSRHTSPT. Residues 505 to 515 are compositionally biased toward basic and acidic residues; the sequence is RLREKRYDRKT. The segment covering 568 to 578 has biased composition (basic residues); it reads VNSRRQKRTKP. Residues 591–600 show a composition bias toward low complexity; it reads DSSSESSTSE.

This sequence belongs to the neuregulin family. In terms of processing, proteolytic cleavage close to the plasma membrane on the external face leads to the release of the soluble growth factor form. Extensive glycosylation precedes the proteolytic cleavage. In terms of tissue distribution, isoform alpha1 is expressed in brain and muscle. Isoform CRD is expressed in brain and spinal cord, but at very low level in muscle.

It localises to the cell membrane. It is found in the secreted. Direct ligand for the ERBB tyrosine kinase receptors. Induces expression of acetylcholine receptor in synaptic nuclei. The chain is Pro-neuregulin-1, membrane-bound isoform (nrg1) from Xenopus laevis (African clawed frog).